A 379-amino-acid polypeptide reads, in one-letter code: 3-dehydroquinate synthase (379 aa).

Residues 67–72, 101–105, 125–126, Lys-138, and Lys-147 each bind NAD(+); these read SGEKNK, GVVLD, and TT. Residues Glu-180, His-242, and His-258 each coordinate Zn(2+).

Belongs to the sugar phosphate cyclases superfamily. Dehydroquinate synthase family. NAD(+) serves as cofactor. Co(2+) is required as a cofactor. Requires Zn(2+) as cofactor.

The protein localises to the cytoplasm. The catalysed reaction is 7-phospho-2-dehydro-3-deoxy-D-arabino-heptonate = 3-dehydroquinate + phosphate. It functions in the pathway metabolic intermediate biosynthesis; chorismate biosynthesis; chorismate from D-erythrose 4-phosphate and phosphoenolpyruvate: step 2/7. Its function is as follows. Catalyzes the conversion of 3-deoxy-D-arabino-heptulosonate 7-phosphate (DAHP) to dehydroquinate (DHQ). The chain is 3-dehydroquinate synthase from Chlamydia abortus (strain DSM 27085 / S26/3) (Chlamydophila abortus).